The sequence spans 465 residues: tRNA modification GTPase MnmE (465 aa).

Residues R23, E81, and K120 each contribute to the (6S)-5-formyl-5,6,7,8-tetrahydrofolate site. The TrmE-type G domain occupies 217–389 (GVHVVLAGRP…LIASLCDKVG (173 aa)). Residue N227 coordinates K(+). GTP is bound by residues 227 to 232 (NAGKSS), 246 to 252 (TDVAGTT), and 271 to 274 (DTAG). Mg(2+) is bound at residue S231. The K(+) site is built by T246, V248, and T251. Residue T252 participates in Mg(2+) binding. K465 lines the (6S)-5-formyl-5,6,7,8-tetrahydrofolate pocket.

It belongs to the TRAFAC class TrmE-Era-EngA-EngB-Septin-like GTPase superfamily. TrmE GTPase family. Homodimer. Heterotetramer of two MnmE and two MnmG subunits. K(+) serves as cofactor.

The protein resides in the cytoplasm. In terms of biological role, exhibits a very high intrinsic GTPase hydrolysis rate. Involved in the addition of a carboxymethylaminomethyl (cmnm) group at the wobble position (U34) of certain tRNAs, forming tRNA-cmnm(5)s(2)U34. This chain is tRNA modification GTPase MnmE, found in Psychrobacter sp. (strain PRwf-1).